Reading from the N-terminus, the 97-residue chain is Venom peptide HsVx1 (97 aa).

The signal sequence occupies residues 1 to 20 (MSHLRIAVTFLCTLFALTAG).

The protein belongs to the scorpion La1-like peptide family. Contains 4 disulfide bonds. In terms of tissue distribution, expressed by the venom gland.

The protein localises to the secreted. This Heterometrus spinifer (Asia giant forest scorpion) protein is Venom peptide HsVx1.